Consider the following 206-residue polypeptide: Protein-methionine-sulfoxide reductase heme-binding subunit MsrQ (206 aa).

Transmembrane regions (helical) follow at residues 13–33, 79–99, 116–136, 147–167, and 169–189; these read IAIW…INLG, LLGL…SILE, PYLT…LTST, WQKL…HYLW, and VKTL…LLLL.

It belongs to the MsrQ family. In terms of assembly, heterodimer of a catalytic subunit (MsrP) and a heme-binding subunit (MsrQ). The cofactor is FMN. Requires heme b as cofactor.

Its subcellular location is the cell inner membrane. Its function is as follows. Part of the MsrPQ system that repairs oxidized periplasmic proteins containing methionine sulfoxide residues (Met-O), using respiratory chain electrons. Thus protects these proteins from oxidative-stress damage caused by reactive species of oxygen and chlorine generated by the host defense mechanisms. MsrPQ is essential for the maintenance of envelope integrity under bleach stress, rescuing a wide series of structurally unrelated periplasmic proteins from methionine oxidation. MsrQ provides electrons for reduction to the reductase catalytic subunit MsrP, using the quinone pool of the respiratory chain. This chain is Protein-methionine-sulfoxide reductase heme-binding subunit MsrQ, found in Yersinia pestis bv. Antiqua (strain Antiqua).